The primary structure comprises 871 residues: Protein pob1 (871 aa).

Residues 2–65 enclose the SH3 domain; that stretch reads ASQRFVIALH…PASHVELISD (64 aa). The interval 42–168 is disordered; it reads WWEGEDEQGN…PSSDLSNFNT (127 aa). Positions 62-80 are enriched in basic and acidic residues; it reads LISDERSDSSDSRRGKEDF. 2 stretches are compositionally biased toward low complexity: residues 88 to 100 and 109 to 124; these read TRSSLSSSRSTSS and LYSNNSLSSSHSSILN. Over residues 131–168 the composition is skewed to polar residues; sequence SKPSVPSNFNSMFPSSKQEGPSPLLDNQPSSDLSNFNT. Phosphoserine is present on residues Ser224 and Ser225. Tyr229 is subject to Phosphotyrosine. Phosphoserine is present on Ser241. Positions 250–313 constitute an SAM domain; that stretch reads WSTEEVVEWL…LRKIQQLKDS (64 aa). A compositionally biased stretch (low complexity) spans 329–343; it reads ISVSQSSDSSSSIPK. Disordered stretches follow at residues 329-371 and 384-670; these read ISVS…NRPT and PDLD…KSKR. Composition is skewed to polar residues over residues 384-395 and 404-451; these read PDLDSSPSTDWN and TPSS…NSGL. Ser433, Ser439, and Ser440 each carry phosphoserine. Thr442 is modified (phosphothreonine). Phosphoserine is present on Ser444. Low complexity predominate over residues 456–467; sequence TEPISSPSTSSI. Residues 492–511 are compositionally biased toward polar residues; that stretch reads QPSSNVPTKFTGGASESSSV. Ser549 carries the post-translational modification Phosphoserine. The segment covering 549–560 has biased composition (low complexity); it reads SPSSISSRLPSS. Composition is skewed to polar residues over residues 561-574 and 583-606; these read NLEQGSSSSVTKSP and KASSPVTSKGVSINEKSAVNNYAT. One can recognise a PH domain in the interval 698–808; sequence TADCHGWMRK…WSSAFLKATV (111 aa).

It localises to the cytoplasm. Its subcellular location is the membrane. In terms of biological role, has a role in cell elongation and separation. This is Protein pob1 (pob1) from Schizosaccharomyces pombe (strain 972 / ATCC 24843) (Fission yeast).